Consider the following 308-residue polypeptide: Porphobilinogen deaminase (308 aa).

Position 241 is an S-(dipyrrolylmethanemethyl)cysteine (cysteine 241).

The protein belongs to the HMBS family. As to quaternary structure, monomer. Dipyrromethane serves as cofactor.

The catalysed reaction is 4 porphobilinogen + H2O = hydroxymethylbilane + 4 NH4(+). It participates in porphyrin-containing compound metabolism; protoporphyrin-IX biosynthesis; coproporphyrinogen-III from 5-aminolevulinate: step 2/4. Functionally, tetrapolymerization of the monopyrrole PBG into the hydroxymethylbilane pre-uroporphyrinogen in several discrete steps. In Staphylococcus carnosus (strain TM300), this protein is Porphobilinogen deaminase.